Here is a 375-residue protein sequence, read N- to C-terminus: Probable butyrate kinase 2 (375 aa).

The protein belongs to the acetokinase family.

It is found in the cytoplasm. It carries out the reaction butanoate + ATP = butanoyl phosphate + ADP. The chain is Probable butyrate kinase 2 from Thermotoga maritima (strain ATCC 43589 / DSM 3109 / JCM 10099 / NBRC 100826 / MSB8).